Consider the following 298-residue polypeptide: Probable pyridoxal 5'-phosphate synthase subunit SNZ2 (298 aa).

Aspartate 21 lines the D-ribose 5-phosphate pocket. Catalysis depends on lysine 78, which acts as the Schiff-base intermediate with D-ribose 5-phosphate. D-ribose 5-phosphate contacts are provided by residues glycine 150, glycine 213, and 234–235; that span reads GS.

It belongs to the PdxS/SNZ family. In terms of assembly, homohexamer. Interacts with THI11.

The enzyme catalyses aldehydo-D-ribose 5-phosphate + D-glyceraldehyde 3-phosphate + L-glutamine = pyridoxal 5'-phosphate + L-glutamate + phosphate + 3 H2O + H(+). It functions in the pathway cofactor biosynthesis; pyridoxal 5'-phosphate biosynthesis. Its function is as follows. Catalyzes the formation of pyridoxal 5'-phosphate from ribose 5-phosphate (RBP), glyceraldehyde 3-phosphate (G3P) and ammonia. The ammonia is provided by a SNO isoform. Can also use ribulose 5-phosphate and dihydroxyacetone phosphate as substrates, resulting from enzyme-catalyzed isomerization of RBP and G3P, respectively. The chain is Probable pyridoxal 5'-phosphate synthase subunit SNZ2 (SNZ2) from Saccharomyces cerevisiae (strain ATCC 204508 / S288c) (Baker's yeast).